Reading from the N-terminus, the 264-residue chain is Ubiquinone biosynthesis protein COQ4 homolog, mitochondrial (264 aa).

Residues 1–26 (MMQRCWQISLPLARRRLIPSLTSKRT) constitute a mitochondrion transit peptide. Positions 169, 170, 173, and 185 each coordinate Zn(2+).

This sequence belongs to the COQ4 family. Component of a multi-subunit COQ enzyme complex. Requires Zn(2+) as cofactor.

It is found in the mitochondrion inner membrane. The catalysed reaction is a 4-hydroxy-3-methoxy-5-(all-trans-polyprenyl)benzoate + H(+) = a 2-methoxy-6-(all-trans-polyprenyl)phenol + CO2. It participates in cofactor biosynthesis; ubiquinone biosynthesis. In terms of biological role, lyase that catalyzes the C1-decarboxylation of 4-hydroxy-3-methoxy-5-(all-trans-polyprenyl)benzoic acid into 2-methoxy-6-(all-trans-polyprenyl)phenol during ubiquinone biosynthesis. This Drosophila grimshawi (Hawaiian fruit fly) protein is Ubiquinone biosynthesis protein COQ4 homolog, mitochondrial.